A 410-amino-acid polypeptide reads, in one-letter code: MTATKQTAQVTAVADGTVVTPKGFQAAGVHAGLRYSKKDLGVILCDVPASAAAVYTQSHFQAAPLKVTQASLAVEQKLQAVIVNSACANACTGEQGLKDAYEMRELCAKQFGLALHHVAVASTGVIGEYLPMEKIRAGIKQLVPGVTMADAEAFQTAILTTDTVMKRACYQTTVDGKTVTVGGAAKGSGMIHPNMATMLAFITTDANISSAVLHDALRSITDVSFNQITVDGDTSTNDMVVVMASGLAGNDELTPNHPDWEHFYEALRKTCEDLAKQIARDGEGATKLIEVRVRGAKTDEEAKKIAKQIVGSNLVKTAVYGADANWGRIIGAIGYSDAEVNPDNVDVAIGPIVMLKGSEPQPFSEEEATAYLQQETVVIEVDLHLGDGFGVAWGCDLTYDYVKINASYRT.

The substrate site is built by Thr160, Lys186, Thr197, Glu283, Asn405, and Thr410. Thr197 (nucleophile) is an active-site residue.

It belongs to the ArgJ family. As to quaternary structure, heterotetramer of two alpha and two beta chains.

It localises to the cytoplasm. The enzyme catalyses N(2)-acetyl-L-ornithine + L-glutamate = N-acetyl-L-glutamate + L-ornithine. The catalysed reaction is L-glutamate + acetyl-CoA = N-acetyl-L-glutamate + CoA + H(+). It participates in amino-acid biosynthesis; L-arginine biosynthesis; L-ornithine and N-acetyl-L-glutamate from L-glutamate and N(2)-acetyl-L-ornithine (cyclic): step 1/1. The protein operates within amino-acid biosynthesis; L-arginine biosynthesis; N(2)-acetyl-L-ornithine from L-glutamate: step 1/4. In terms of biological role, catalyzes two activities which are involved in the cyclic version of arginine biosynthesis: the synthesis of N-acetylglutamate from glutamate and acetyl-CoA as the acetyl donor, and of ornithine by transacetylation between N(2)-acetylornithine and glutamate. In Geobacillus kaustophilus (strain HTA426), this protein is Arginine biosynthesis bifunctional protein ArgJ.